Consider the following 644-residue polypeptide: Putative aldehyde dehydrogenase-like protein YHR039C (644 aa).

A glycan (N-linked (GlcNAc...) asparagine) is linked at N15. The active-site Proton acceptor is the E354. The active-site Nucleophile is the C389. N-linked (GlcNAc...) asparagine glycans are attached at residues N565 and N627.

Belongs to the aldehyde dehydrogenase family. N-glycosylated.

It localises to the endoplasmic reticulum. In Saccharomyces cerevisiae (strain ATCC 204508 / S288c) (Baker's yeast), this protein is Putative aldehyde dehydrogenase-like protein YHR039C (MSC7).